The primary structure comprises 200 residues: Putative 3-methyladenine DNA glycosylase (200 aa).

This sequence belongs to the DNA glycosylase MPG family.

This chain is Putative 3-methyladenine DNA glycosylase, found in Rhodopseudomonas palustris (strain BisB18).